We begin with the raw amino-acid sequence, 234 residues long: 2,3-bisphosphoglycerate-dependent phosphoglycerate mutase (234 aa).

Residues 8–15 (RHGESVWN), 21–22 (TG), R60, 87–90 (ERHY), K98, 114–115 (RR), and 183–184 (GN) contribute to the substrate site. The active-site Tele-phosphohistidine intermediate is H9. E87 functions as the Proton donor/acceptor in the catalytic mechanism.

Belongs to the phosphoglycerate mutase family. BPG-dependent PGAM subfamily. Homodimer.

The enzyme catalyses (2R)-2-phosphoglycerate = (2R)-3-phosphoglycerate. The protein operates within carbohydrate degradation; glycolysis; pyruvate from D-glyceraldehyde 3-phosphate: step 3/5. Catalyzes the interconversion of 2-phosphoglycerate and 3-phosphoglycerate. The sequence is that of 2,3-bisphosphoglycerate-dependent phosphoglycerate mutase from Geobacter sp. (strain M21).